The chain runs to 188 residues: MAAPGRPARETAAAPGPGRPTCRDAASRTKKQKKKTRDGASVANGSGKTPEKQDPKEAPLSAEAQAEQLARELAWCVEKLELGLKMQRPTPKQKEQALGAIRTLRSQRTPLPRKRQLMRSLFGDYRAQIEAEWREALQALRTAAHSAQVQPVGEAARKKSRRVCRPRPEGRSKGTSDTRDEEFRFNFF.

Disordered regions lie at residues 1 to 65 (MAAP…AEAQ), 87 to 112 (QRPTPKQKEQALGAIRTLRSQRTPLP), and 144 to 182 (AHSAQVQPVGEAARKKSRRVCRPRPEGRSKGTSDTRDEE). An N-acetylalanine modification is found at Ala2. Phosphoserine is present on Ser41. Positions 166 to 182 (PRPEGRSKGTSDTRDEE) are enriched in basic and acidic residues.

The protein belongs to the UPF0488 family.

This Bos taurus (Bovine) protein is UPF0488 protein C8orf33 homolog.